Here is a 146-residue protein sequence, read N- to C-terminus: UPF0178 protein Helmi_09130 (146 aa).

This sequence belongs to the UPF0178 family.

This is UPF0178 protein Helmi_09130 from Heliobacterium modesticaldum (strain ATCC 51547 / Ice1).